The following is an 815-amino-acid chain: 1,4-alpha-glucan branching enzyme GlgB (815 aa).

Asp-405 serves as the catalytic Nucleophile. The Proton donor role is filled by Glu-458.

It belongs to the glycosyl hydrolase 13 family. GlgB subfamily. Monomer.

The enzyme catalyses Transfers a segment of a (1-&gt;4)-alpha-D-glucan chain to a primary hydroxy group in a similar glucan chain.. The protein operates within glycan biosynthesis; glycogen biosynthesis. Functionally, catalyzes the formation of the alpha-1,6-glucosidic linkages in glycogen by scission of a 1,4-alpha-linked oligosaccharide from growing alpha-1,4-glucan chains and the subsequent attachment of the oligosaccharide to the alpha-1,6 position. The protein is 1,4-alpha-glucan branching enzyme GlgB of Histophilus somni (strain 2336) (Haemophilus somnus).